Reading from the N-terminus, the 392-residue chain is Lipase (392 aa).

The N-terminal stretch at 1–26 is a signal peptide; it reads MVSFISISQGVSLCLLVSSMMLGSSA. Residues 27-95 constitute a propeptide that is removed on maturation; the sequence is VPVSGKSGSS…GGNLTSIGKR (69 aa). The disordered stretch occupies residues 50–69; the sequence is PLISSRCAPPSNKGSKSDLQ. Intrachain disulfides connect C152-C391, C163-C166, and C358-C367. Residue S268 is the Nucleophile of the active site. D327 (charge relay system) is an active-site residue. D379 serves as a coordination point for Ca(2+). The Charge relay system role is filled by H380.

Belongs to the AB hydrolase superfamily. Lipase family.

It is found in the secreted. It localises to the extracellular space. The enzyme catalyses a triacylglycerol + H2O = a diacylglycerol + a fatty acid + H(+). With respect to regulation, lipase activity is maximal at a lipid-water interface (interfacial activation), probably by an induced conformational change that results in an increased accessibility of the active site to the substrate. In terms of biological role, hydrolyzes ester bonds of triglycerides as well as of their derived partial glycerides with a strong 1,3-positional specificity. This chain is Lipase, found in Rhizopus niveus.